We begin with the raw amino-acid sequence, 186 residues long: Ribonuclease HII (186 aa).

Positions 2-186 constitute an RNase H type-2 domain; it reads KILAGVDEVG…KTFSPISDLL (185 aa). A divalent metal cation contacts are provided by aspartate 8, glutamate 9, and aspartate 99.

Belongs to the RNase HII family. Mn(2+) serves as cofactor. It depends on Mg(2+) as a cofactor.

The protein localises to the cytoplasm. It carries out the reaction Endonucleolytic cleavage to 5'-phosphomonoester.. Functionally, endonuclease that specifically degrades the RNA of RNA-DNA hybrids. The chain is Ribonuclease HII from Pelagibacter ubique (strain HTCC1062).